We begin with the raw amino-acid sequence, 407 residues long: Multifunctional CCA protein (407 aa).

2 residues coordinate ATP: glycine 8 and arginine 11. CTP is bound by residues glycine 8 and arginine 11. Positions 21 and 23 each coordinate Mg(2+). Positions 91, 137, and 140 each coordinate ATP. 3 residues coordinate CTP: arginine 91, arginine 137, and arginine 140. The region spanning 225 to 326 (CGDHVMRVLD…LRLLKDCDAL (102 aa)) is the HD domain.

This sequence belongs to the tRNA nucleotidyltransferase/poly(A) polymerase family. Bacterial CCA-adding enzyme type 1 subfamily. Monomer. Can also form homodimers and oligomers. Mg(2+) serves as cofactor. The cofactor is Ni(2+).

It carries out the reaction a tRNA precursor + 2 CTP + ATP = a tRNA with a 3' CCA end + 3 diphosphate. It catalyses the reaction a tRNA with a 3' CCA end + 2 CTP + ATP = a tRNA with a 3' CCACCA end + 3 diphosphate. Functionally, catalyzes the addition and repair of the essential 3'-terminal CCA sequence in tRNAs without using a nucleic acid template. Adds these three nucleotides in the order of C, C, and A to the tRNA nucleotide-73, using CTP and ATP as substrates and producing inorganic pyrophosphate. tRNA 3'-terminal CCA addition is required both for tRNA processing and repair. Also involved in tRNA surveillance by mediating tandem CCA addition to generate a CCACCA at the 3' terminus of unstable tRNAs. While stable tRNAs receive only 3'-terminal CCA, unstable tRNAs are marked with CCACCA and rapidly degraded. The polypeptide is Multifunctional CCA protein (Chromobacterium violaceum (strain ATCC 12472 / DSM 30191 / JCM 1249 / CCUG 213 / NBRC 12614 / NCIMB 9131 / NCTC 9757 / MK)).